Here is a 266-residue protein sequence, read N- to C-terminus: Protein-ADP-ribose hydrolase (266 aa).

In terms of domain architecture, Macro spans 74–265; that stretch reads TDLKDLKPIK…LYKEAFNRDA (192 aa). Residues Asp93, Ile94, and Asn107 each contribute to the ADP-D-ribose site. Zn(2+)-binding residues include Cys113, His118, and Cys120. Residues Cys120, Ile121, Asp122, Ser212, Thr213, Gly214, and Phe216 each coordinate ADP-D-ribose.

Belongs to the MacroD-type family. Zn-Macro subfamily. Zn(2+) serves as cofactor.

The catalysed reaction is 4-O-(ADP-D-ribosyl)-L-aspartyl-[protein] + H2O = L-aspartyl-[protein] + ADP-D-ribose + H(+). Its function is as follows. ADP-ribosylhydrolase that specifically reverses the SirTM-mediated mono-ADP-ribosylation at an asparatate residue of GcvH-L, by releasing ADP-ribose from the target protein. May play a role in the regulation of the response to host-induced oxidative stress. This is Protein-ADP-ribose hydrolase from Staphylococcus aureus (strain MSSA476).